The following is a 311-amino-acid chain: Olfactory receptor 5AN1 (311 aa).

The Extracellular segment spans residues 1–26 (MTGGGNITEITYFILLGFSDFPRIIK). A glycan (N-linked (GlcNAc...) asparagine) is linked at Asn-6. Residues 27–47 (VLFTIFLVIYITSLAWNLSLI) traverse the membrane as a helical segment. At 48-55 (VLIRMDSH) the chain is on the cytoplasmic side. Residues 56 to 76 (LHTPMYFFLSNLSFIDVCYIS) traverse the membrane as a helical segment. The Extracellular segment spans residues 77–100 (STVPKMLSNLLQEQQTITFVGCII). Residues Cys-98 and Cys-190 are joined by a disulfide bond. Residues 101-121 (QYFIFSTMGLSESCLMTAMAY) form a helical membrane-spanning segment. The Cytoplasmic segment spans residues 122-134 (DRYAAICNPLLYS). The helical transmembrane segment at 135 to 155 (SIMSPTLCVWMVLGAYMTGLT) threads the bilayer. Topologically, residues 156–197 (ASLFQIGALLQLHFCGSNVIRHFFCDMPQLLILSCTDTFFVQ) are extracellular. Residues 198–218 (VMTAILTMFFGIASALVIMIS) form a helical membrane-spanning segment. Residues 219–238 (YGYIGISIMKITSAKGRSKA) are Cytoplasmic-facing. The chain crosses the membrane as a helical span at residues 239–259 (FNTCASHLTAVSLFYTSGIFV). Topologically, residues 260-272 (YLSSSSGGSSSFD) are extracellular. The chain crosses the membrane as a helical span at residues 273 to 293 (RFASVFYTVVIPMLNPLIYSL). Topologically, residues 294–311 (RNKEIKDALKRLQKRKCC) are cytoplasmic.

It belongs to the G-protein coupled receptor 1 family.

It is found in the cell membrane. Odorant receptor for musk, which specifically recognizes muscone, musk xylol, and musk ketone. Ligand-binding causes a conformation change that triggers signaling via G(s)-class of G alpha protein GNAL, activating adenylyl cyclase. This chain is Olfactory receptor 5AN1, found in Homo sapiens (Human).